A 332-amino-acid polypeptide reads, in one-letter code: Flotillin-like protein FloA (332 aa).

Residues 9 to 29 (FILIGGGIIFVVLFFHYVPFF) form a helical membrane-spanning segment.

Belongs to the flotillin-like FloA family. As to quaternary structure, homooligomerizes.

Its subcellular location is the cell membrane. The protein resides in the membrane raft. Functionally, found in functional membrane microdomains (FMM) that may be equivalent to eukaryotic membrane rafts. FMMs are highly dynamic and increase in number as cells age. Flotillins are thought to be important factors in membrane fluidity. The sequence is that of Flotillin-like protein FloA from Phocaeicola vulgatus (strain ATCC 8482 / DSM 1447 / JCM 5826 / CCUG 4940 / NBRC 14291 / NCTC 11154) (Bacteroides vulgatus).